A 497-amino-acid polypeptide reads, in one-letter code: uncharacterized protein (497 aa).

2 consecutive ABC transporter domains span residues Val9–Ala247 and Ala256–Ala496. Gly41–Ser48 provides a ligand contact to ATP.

The protein belongs to the ABC transporter superfamily. Ribose importer (TC 3.A.1.2.1) family.

Its subcellular location is the cell membrane. In terms of biological role, probably part of the binding-protein-dependent transport system y4mIJK. This system probably transports a sugar. Probably responsible for energy coupling to the transport system. This is an uncharacterized protein from Sinorhizobium fredii (strain NBRC 101917 / NGR234).